We begin with the raw amino-acid sequence, 417 residues long: Phosphoglycerate kinase 2 (417 aa).

S2 carries the N-acetylserine modification. Phosphoserine occurs at positions 2 and 4. K11 is modified (N6-acetyllysine). V23, D24, F25, N26, Q38, and R39 together coordinate (2R)-3-phosphoglycerate. Residue K48 is modified to N6-acetyllysine. The (2R)-3-phosphoglycerate site is built by S62, H63, G65, and R66. K75, K86, and K97 each carry N6-acetyllysine. Residues L122 and R123 each contribute to the (2R)-3-phosphoglycerate site. An N6-acetyllysine mark is found at K131 and K146. Positions 170 and 171 each coordinate (2R)-3-phosphoglycerate. Y196 bears the Phosphotyrosine mark. Residue K199 is modified to N6-acetyllysine. ADP is bound at residue G214. G214 contacts CDP. AMP is bound by residues A215 and K216. Position 215 (A215) interacts with ATP. A215 contacts Mg(2+). The Mg(2+) site is built by A218 and D219. A CDP-binding site is contributed by D219. K220 serves as a coordination point for AMP. K220 contributes to the ATP binding site. G238 serves as a coordination point for ADP. G238 lines the CDP pocket. Position 239 (G239) interacts with AMP. G239 contributes to the ATP binding site. N6-acetyllysine is present on residues K267 and K291. Position 313 (G313) interacts with AMP. G313 contacts ATP. The CDP site is built by G338, V340, and F343. F343 is a binding site for ADP. E344 provides a ligand contact to AMP. The ATP site is built by E344, D375, and T376. D375 provides a ligand contact to Mg(2+).

This sequence belongs to the phosphoglycerate kinase family. In terms of assembly, monomer. Requires Mg(2+) as cofactor.

The protein resides in the cytoplasm. It catalyses the reaction (2R)-3-phosphoglycerate + ATP = (2R)-3-phospho-glyceroyl phosphate + ADP. It functions in the pathway carbohydrate degradation; glycolysis; pyruvate from D-glyceraldehyde 3-phosphate: step 2/5. Essential for sperm motility and male fertility but is not required for the completion of spermatogenesis. This chain is Phosphoglycerate kinase 2 (PGK2), found in Equus caballus (Horse).